Here is a 203-residue protein sequence, read N- to C-terminus: Recombination protein RecR (203 aa).

The C4-type zinc finger occupies 56–71 (CTVCGNVSDDERCRIC). The Toprim domain maps to 79–179 (SVVCVVEEPK…TVTRIASGLP (101 aa)).

This sequence belongs to the RecR family.

May play a role in DNA repair. It seems to be involved in an RecBC-independent recombinational process of DNA repair. It may act with RecF and RecO. In Mycobacterium leprae (strain TN), this protein is Recombination protein RecR.